Reading from the N-terminus, the 176-residue chain is Peptide deformylase 1 (176 aa).

Fe cation is bound by residues C99 and H141. The active site involves E142. Position 145 (H145) interacts with Fe cation.

It belongs to the polypeptide deformylase family. Requires Fe(2+) as cofactor.

It catalyses the reaction N-terminal N-formyl-L-methionyl-[peptide] + H2O = N-terminal L-methionyl-[peptide] + formate. In terms of biological role, removes the formyl group from the N-terminal Met of newly synthesized proteins. Requires at least a dipeptide for an efficient rate of reaction. N-terminal L-methionine is a prerequisite for activity but the enzyme has broad specificity at other positions. This Bordetella pertussis (strain Tohama I / ATCC BAA-589 / NCTC 13251) protein is Peptide deformylase 1.